A 99-amino-acid chain; its full sequence is Nucleoid-associated protein EbfC (99 aa).

This sequence belongs to the YbaB/EbfC family. Homodimer.

The protein resides in the cytoplasm. It localises to the nucleoid. Binds to DNA and alters its conformation. May be involved in regulation of gene expression, nucleoid organization and DNA protection. In Borrelia duttonii (strain Ly), this protein is Nucleoid-associated protein EbfC.